The primary structure comprises 315 residues: Acetyl-coenzyme A carboxylase carboxyl transferase subunit alpha (315 aa).

Residues 40–293 (LQDKSKTLTE…REELSSQLAM (254 aa)) enclose the CoA carboxyltransferase C-terminal domain.

Belongs to the AccA family. In terms of assembly, acetyl-CoA carboxylase is a heterohexamer composed of biotin carboxyl carrier protein (AccB), biotin carboxylase (AccC) and two subunits each of ACCase subunit alpha (AccA) and ACCase subunit beta (AccD).

The protein resides in the cytoplasm. The enzyme catalyses N(6)-carboxybiotinyl-L-lysyl-[protein] + acetyl-CoA = N(6)-biotinyl-L-lysyl-[protein] + malonyl-CoA. Its pathway is lipid metabolism; malonyl-CoA biosynthesis; malonyl-CoA from acetyl-CoA: step 1/1. Component of the acetyl coenzyme A carboxylase (ACC) complex. First, biotin carboxylase catalyzes the carboxylation of biotin on its carrier protein (BCCP) and then the CO(2) group is transferred by the carboxyltransferase to acetyl-CoA to form malonyl-CoA. This chain is Acetyl-coenzyme A carboxylase carboxyl transferase subunit alpha, found in Pseudomonas savastanoi pv. phaseolicola (strain 1448A / Race 6) (Pseudomonas syringae pv. phaseolicola (strain 1448A / Race 6)).